The chain runs to 327 residues: MRPPGFWSRPPTHPLARLLAPAGRVYGGLTANRMDRPGATPPCPVLCVGNFTLGGAGKTPTALSLVRLLRELGRTPALLSRGYGGRLAGPLVVDPARHAAAEVGDEPLLLAQAAPTIVARDRPAGARLCAASGADVIVMDDGLQNPSLTKTLSLAVVDGGAGLGNGLPFPAGPLRAPLARQWPHVAGLVLVGEGGPGEAMAAEAERRGLPVHRARLVPETGSDWAGRRVVAFAGIGRPQKFFETLRSLGAEIVAEGAFPDHHPYRPGDWTALSALAAREGASLVTTEKDAVRLPAEARAVVDVLRVTLAFANETRLRQQLAAAFPHA.

52-59 (TLGGAGKT) serves as a coordination point for ATP.

This sequence belongs to the LpxK family.

It catalyses the reaction a lipid A disaccharide + ATP = a lipid IVA + ADP + H(+). Its pathway is glycolipid biosynthesis; lipid IV(A) biosynthesis; lipid IV(A) from (3R)-3-hydroxytetradecanoyl-[acyl-carrier-protein] and UDP-N-acetyl-alpha-D-glucosamine: step 6/6. Functionally, transfers the gamma-phosphate of ATP to the 4'-position of a tetraacyldisaccharide 1-phosphate intermediate (termed DS-1-P) to form tetraacyldisaccharide 1,4'-bis-phosphate (lipid IVA). The polypeptide is Tetraacyldisaccharide 4'-kinase (Methylorubrum extorquens (strain PA1) (Methylobacterium extorquens)).